The chain runs to 123 residues: Large ribosomal subunit protein uL14 (123 aa).

It belongs to the universal ribosomal protein uL14 family. Part of the 50S ribosomal subunit. Forms a cluster with proteins L3 and L19. In the 70S ribosome, L14 and L19 interact and together make contacts with the 16S rRNA in bridges B5 and B8.

Its function is as follows. Binds to 23S rRNA. Forms part of two intersubunit bridges in the 70S ribosome. This Blochmanniella floridana protein is Large ribosomal subunit protein uL14.